Consider the following 461-residue polypeptide: ERBB receptor feedback inhibitor 1 (461 aa).

Ser-2 is subject to N-acetylserine. A phosphothreonine mark is found at Thr-126 and Thr-130. The interval 228–353 (QNRVVPDPNP…VMPPTQSFAP (126 aa)) is disordered. Ser-251 and Ser-272 each carry phosphoserine. The span at 265-274 (SSCTHRASPS) shows a compositional bias: polar residues. Residues 283 to 292 (PPRVPIPPRP) show a composition bias toward pro residues. Ser-301 carries the phosphoserine modification. Residues 311 to 324 (DEDRPPKVPPREPL) are compositionally biased toward basic and acidic residues. Positions 325–336 (SRSNSRTPSPKS) are enriched in polar residues. Residues 333-362 (SPKSLPSYLNGVMPPTQSFAPDPKYVSSKA) form an interaction with EGFR and ERBB2 and regulation of EGFR activation region. Phosphoserine is present on Ser-460.

Belongs to the MIG6 family. As to quaternary structure, interacts with EGFR. Interacts with ERBB2. In terms of tissue distribution, detected in lung, in airway epithelial cells and alveolar type 2 cells (at protein level). Detected in uterus stroma, luminal epithelium and glandular epithelium.

It localises to the cytoplasm. Its subcellular location is the cell membrane. It is found in the nucleus. Negative regulator of EGFR signaling in skin morphogenesis. Acts as a negative regulator for several EGFR family members, including ERBB2, ERBB3 and ERBB4. Inhibits EGFR catalytic activity by interfering with its dimerization. Inhibits autophosphorylation of EGFR, ERBB2 and ERBB4. Important for normal keratinocyte proliferation and differentiation. Plays a role in modulating the response to steroid hormones in the uterus. Required for normal response to progesterone in the uterus and for fertility. Mediates epithelial estrogen responses in the uterus by regulating ESR1 levels and activation. Important for regulation of endometrium cell proliferation. Important for normal prenatal and perinatal lung development. This Mus musculus (Mouse) protein is ERBB receptor feedback inhibitor 1 (Errfi1).